We begin with the raw amino-acid sequence, 282 residues long: Phosphatidylserine decarboxylase proenzyme (282 aa).

Catalysis depends on charge relay system; for autoendoproteolytic cleavage activity residues D85, H142, and S244. S244 (schiff-base intermediate with substrate; via pyruvic acid; for decarboxylase activity) is an active-site residue. S244 is subject to Pyruvic acid (Ser); by autocatalysis.

Belongs to the phosphatidylserine decarboxylase family. PSD-B subfamily. Prokaryotic type I sub-subfamily. Heterodimer of a large membrane-associated beta subunit and a small pyruvoyl-containing alpha subunit. Requires pyruvate as cofactor. Is synthesized initially as an inactive proenzyme. Formation of the active enzyme involves a self-maturation process in which the active site pyruvoyl group is generated from an internal serine residue via an autocatalytic post-translational modification. Two non-identical subunits are generated from the proenzyme in this reaction, and the pyruvate is formed at the N-terminus of the alpha chain, which is derived from the carboxyl end of the proenzyme. The autoendoproteolytic cleavage occurs by a canonical serine protease mechanism, in which the side chain hydroxyl group of the serine supplies its oxygen atom to form the C-terminus of the beta chain, while the remainder of the serine residue undergoes an oxidative deamination to produce ammonia and the pyruvoyl prosthetic group on the alpha chain. During this reaction, the Ser that is part of the protease active site of the proenzyme becomes the pyruvoyl prosthetic group, which constitutes an essential element of the active site of the mature decarboxylase.

It is found in the cell membrane. The enzyme catalyses a 1,2-diacyl-sn-glycero-3-phospho-L-serine + H(+) = a 1,2-diacyl-sn-glycero-3-phosphoethanolamine + CO2. It participates in phospholipid metabolism; phosphatidylethanolamine biosynthesis; phosphatidylethanolamine from CDP-diacylglycerol: step 2/2. Catalyzes the formation of phosphatidylethanolamine (PtdEtn) from phosphatidylserine (PtdSer). The protein is Phosphatidylserine decarboxylase proenzyme of Coxiella burnetii (strain Dugway 5J108-111).